We begin with the raw amino-acid sequence, 428 residues long: Glial fibrillary acidic protein (428 aa).

Residues 1–68 (MERRRVTSAT…KETRASERAE (68 aa)) form a head region. Residue Thr7 is modified to Phosphothreonine; by AURKB and ROCK1. Arg12 carries the omega-N-methylarginine modification. Phosphoserine; by AURKB and ROCK1 is present on Ser13. 2 positions are modified to citrulline: Arg26 and Arg32. Ser34 bears the Phosphoserine; by AURKB and ROCK1 mark. The IF rod domain occupies 65–373 (ERAEMMELND…KLLEGEENRI (309 aa)). The interval 69-100 (MMELNDRFASYIEKVRFLEQQNKALAAELNQL) is coil 1A. Phosphoserine is present on Ser78. Positions 101-111 (RAKEPTKLADV) are linker 1. Residues Thr106 and Thr146 each carry the phosphothreonine modification. The coil 1B stretch occupies residues 112 to 210 (YQAELRELRL…EEEVRELQEQ (99 aa)). A linker 12 region spans residues 211-226 (LAQQQVHVEMDVAKPD). The coil 2A stretch occupies residues 227–248 (LTAALREIRTQYEAVASSNMHE). A linker 2 region spans residues 249 to 252 (AEEW). The coil 2B stretch occupies residues 253-373 (YRSKFADLND…KLLEGEENRI (121 aa)). At Arg266 the chain carries Citrulline. Residue Ser319 is modified to Phosphoserine. Residues 374-428 (TIPVQTFSNLQIRETSLDTKSVSEGHLKRNIVVKTVEMRDGEVIKESKQEHKDVM) are tail. Thr379 is modified (phosphothreonine). Ser381 carries the phosphoserine modification. Citrulline occurs at positions 402 and 412.

It belongs to the intermediate filament family. As to quaternary structure, interacts with SYNM. Phosphorylated by PKN1.

It is found in the cytoplasm. In terms of biological role, GFAP, a class-III intermediate filament, is a cell-specific marker that, during the development of the central nervous system, distinguishes astrocytes from other glial cells. This is Glial fibrillary acidic protein (GFAP) from Bos taurus (Bovine).